The primary structure comprises 331 residues: UPF0194 membrane protein YbhG (331 aa).

The signal sequence occupies residues 1 to 19; it reads MKKPVVIGLAIAAIVAVIA. Positions 107–208 form a coiled coil; the sequence is EEIAQAAAAV…LDLQDTTLIA (102 aa).

It belongs to the UPF0194 family.

Its subcellular location is the periplasm. The polypeptide is UPF0194 membrane protein YbhG (Salmonella gallinarum (strain 287/91 / NCTC 13346)).